Reading from the N-terminus, the 332-residue chain is Protein FAM9A (332 aa).

The span at 1-13 (MEPVGRKRSRKAA) shows a compositional bias: basic residues. Disordered regions lie at residues 1-114 (MEPV…EHTG) and 186-293 (QKDD…PTGV). 2 stretches are compositionally biased toward basic and acidic residues: residues 74–91 (GKDP…FTET) and 98–114 (DEHG…EHTG). A compositionally biased stretch (low complexity) spans 196 to 217 (AAAAAAEAAAAAEAAAAAAEVI). Residues 218 to 275 (VVEDEEEEEKEEEEEKEEEEEEGEEEGGGEEGEEGGGGGEGEETEEEEEEEEEEEEEE) are compositionally biased toward acidic residues. Over residues 276-285 (QIKAFQEKQK) the composition is skewed to basic and acidic residues.

The protein belongs to the XLR/SYCP3 family. As to expression, expressed exclusively in testis.

The protein resides in the nucleus. It is found in the nucleolus. The sequence is that of Protein FAM9A from Homo sapiens (Human).